Consider the following 297-residue polypeptide: Homoserine kinase (297 aa).

82–92 (PLTRGLGSSAS) provides a ligand contact to ATP.

The protein belongs to the GHMP kinase family. Homoserine kinase subfamily.

The protein resides in the cytoplasm. The enzyme catalyses L-homoserine + ATP = O-phospho-L-homoserine + ADP + H(+). Its pathway is amino-acid biosynthesis; L-threonine biosynthesis; L-threonine from L-aspartate: step 4/5. Catalyzes the ATP-dependent phosphorylation of L-homoserine to L-homoserine phosphate. The protein is Homoserine kinase of Bacillus cereus (strain ATCC 14579 / DSM 31 / CCUG 7414 / JCM 2152 / NBRC 15305 / NCIMB 9373 / NCTC 2599 / NRRL B-3711).